A 246-amino-acid polypeptide reads, in one-letter code: Bis(5'-nucleosyl)-tetraphosphatase PrpE [asymmetrical] (246 aa).

It belongs to the PrpE family. It depends on Ni(2+) as a cofactor.

The catalysed reaction is P(1),P(4)-bis(5'-guanosyl) tetraphosphate + H2O = GMP + GTP + 2 H(+). Asymmetrically hydrolyzes Ap4p to yield AMP and ATP. This Halalkalibacterium halodurans (strain ATCC BAA-125 / DSM 18197 / FERM 7344 / JCM 9153 / C-125) (Bacillus halodurans) protein is Bis(5'-nucleosyl)-tetraphosphatase PrpE [asymmetrical].